Reading from the N-terminus, the 321-residue chain is Protein ABIL3 (321 aa).

2 disordered regions span residues Thr179–Ser273 and Glu279–Leu298. 2 stretches are compositionally biased toward low complexity: residues Ser204–Ala215 and Ile240–Arg255. Positions Glu279 to His288 are enriched in basic and acidic residues.

It belongs to the ABI family. As to quaternary structure, binds SCAR.

It localises to the cytoplasm. Its subcellular location is the cytoskeleton. Functionally, involved in regulation of actin and microtubule organization. Part of a WAVE complex that activates the Arp2/3 complex. In Arabidopsis thaliana (Mouse-ear cress), this protein is Protein ABIL3 (ABIL3).